A 1187-amino-acid polypeptide reads, in one-letter code: Nucleolar protein 6 (1187 aa).

Residues Met1–Ala20 show a composition bias toward basic and acidic residues. 2 disordered regions span residues Met1–Pro64 and Arg1134–Cys1187.

The protein belongs to the NRAP family. In terms of assembly, part of the small subunit (SSU) processome, composed of more than 70 proteins and the RNA chaperone small nucleolar RNA (snoRNA) U3.

The protein resides in the nucleus. Its subcellular location is the nucleolus. It is found in the chromosome. Part of the small subunit (SSU) processome, first precursor of the small eukaryotic ribosomal subunit. During the assembly of the SSU processome in the nucleolus, many ribosome biogenesis factors, an RNA chaperone and ribosomal proteins associate with the nascent pre-rRNA and work in concert to generate RNA folding, modifications, rearrangements and cleavage as well as targeted degradation of pre-ribosomal RNA by the RNA exosome. This Drosophila mojavensis (Fruit fly) protein is Nucleolar protein 6.